The primary structure comprises 248 residues: Proteasome subunit alpha (248 aa).

Belongs to the peptidase T1A family. In terms of assembly, the 20S proteasome core is composed of 14 alpha and 14 beta subunits that assemble into four stacked heptameric rings, resulting in a barrel-shaped structure. The two inner rings, each composed of seven catalytic beta subunits, are sandwiched by two outer rings, each composed of seven alpha subunits. The catalytic chamber with the active sites is on the inside of the barrel. Has a gated structure, the ends of the cylinder being occluded by the N-termini of the alpha-subunits. Is capped at one or both ends by the proteasome regulatory ATPase, PAN.

Its subcellular location is the cytoplasm. The formation of the proteasomal ATPase PAN-20S proteasome complex, via the docking of the C-termini of PAN into the intersubunit pockets in the alpha-rings, triggers opening of the gate for substrate entry. Interconversion between the open-gate and close-gate conformations leads to a dynamic regulation of the 20S proteasome proteolysis activity. In terms of biological role, component of the proteasome core, a large protease complex with broad specificity involved in protein degradation. This chain is Proteasome subunit alpha, found in Methanothermobacter thermautotrophicus (strain ATCC 29096 / DSM 1053 / JCM 10044 / NBRC 100330 / Delta H) (Methanobacterium thermoautotrophicum).